Here is a 226-residue protein sequence, read N- to C-terminus: Cell division protein SepF (226 aa).

The segment at 20 to 116 (RAYDDAGYDK…ESLTYHTRDN (97 aa)) is disordered. Over residues 22 to 44 (YDDAGYDKGGYRESRYRSSRYSE) the composition is skewed to basic and acidic residues. Positions 45-56 (DFGDEDDEDEEA) are enriched in acidic residues. Positions 62–95 (RRGDRSRLERAAARSGDVDHNVEGEQPERVERAS) are enriched in basic and acidic residues. A compositionally biased stretch (polar residues) spans 97 to 111 (RSITRSAEPSESLTY).

It belongs to the SepF family. Homodimer. Interacts with FtsZ.

The protein localises to the cytoplasm. Cell division protein that is part of the divisome complex and is recruited early to the Z-ring. Probably stimulates Z-ring formation, perhaps through the cross-linking of FtsZ protofilaments. Its function overlaps with FtsA. The protein is Cell division protein SepF of Salinispora arenicola (strain CNS-205).